A 290-amino-acid chain; its full sequence is 4-hydroxybenzoate octaprenyltransferase (290 aa).

Helical transmembrane passes span 21–41, 44–64, 97–117, 143–163, 168–188, 211–231, 235–255, and 270–290; these read IGTM…ADGM, LRVL…GCII, LFVV…PLVV, FLGV…TGEV, WWLF…YAMV, EIIG…GWSG, LLYG…QRLI, and NNWA…FAAL.

It belongs to the UbiA prenyltransferase family. Requires Mg(2+) as cofactor.

It localises to the cell inner membrane. It carries out the reaction all-trans-octaprenyl diphosphate + 4-hydroxybenzoate = 4-hydroxy-3-(all-trans-octaprenyl)benzoate + diphosphate. It participates in cofactor biosynthesis; ubiquinone biosynthesis. Catalyzes the prenylation of para-hydroxybenzoate (PHB) with an all-trans polyprenyl group. Mediates the second step in the final reaction sequence of ubiquinone-8 (UQ-8) biosynthesis, which is the condensation of the polyisoprenoid side chain with PHB, generating the first membrane-bound Q intermediate 3-octaprenyl-4-hydroxybenzoate. The sequence is that of 4-hydroxybenzoate octaprenyltransferase from Shewanella amazonensis (strain ATCC BAA-1098 / SB2B).